Consider the following 162-residue polypeptide: UPF0102 protein Bpet0439 (162 aa).

A disordered region spans residues 15 to 52 (QAQQRQMKRRRAAAHRAARGPAPARAPRASPTQRTGTA). Over residues 20-32 (QMKRRRAAAHRAA) the composition is skewed to basic residues. Over residues 33 to 48 (RGPAPARAPRASPTQR) the composition is skewed to low complexity.

This sequence belongs to the UPF0102 family.

This is UPF0102 protein Bpet0439 from Bordetella petrii (strain ATCC BAA-461 / DSM 12804 / CCUG 43448).